The primary structure comprises 160 residues: S-ribosylhomocysteine lyase (160 aa).

Positions 57, 61, and 127 each coordinate Fe cation.

It belongs to the LuxS family. As to quaternary structure, homodimer. Fe cation serves as cofactor.

It carries out the reaction S-(5-deoxy-D-ribos-5-yl)-L-homocysteine = (S)-4,5-dihydroxypentane-2,3-dione + L-homocysteine. In terms of biological role, involved in the synthesis of autoinducer 2 (AI-2) which is secreted by bacteria and is used to communicate both the cell density and the metabolic potential of the environment. The regulation of gene expression in response to changes in cell density is called quorum sensing. Catalyzes the transformation of S-ribosylhomocysteine (RHC) to homocysteine (HC) and 4,5-dihydroxy-2,3-pentadione (DPD). This is S-ribosylhomocysteine lyase from Streptococcus pneumoniae (strain CGSP14).